Reading from the N-terminus, the 156-residue chain is 6,7-dimethyl-8-ribityllumazine synthase (156 aa).

Residues Phe-23, 57–59 (AFE), and 81–83 (AVI) contribute to the 5-amino-6-(D-ribitylamino)uracil site. 86–87 (AT) is a binding site for (2S)-2-hydroxy-3-oxobutyl phosphate. Residue His-89 is the Proton donor of the active site. Position 114 (Phe-114) interacts with 5-amino-6-(D-ribitylamino)uracil. A (2S)-2-hydroxy-3-oxobutyl phosphate-binding site is contributed by Arg-128.

It belongs to the DMRL synthase family.

It carries out the reaction (2S)-2-hydroxy-3-oxobutyl phosphate + 5-amino-6-(D-ribitylamino)uracil = 6,7-dimethyl-8-(1-D-ribityl)lumazine + phosphate + 2 H2O + H(+). It participates in cofactor biosynthesis; riboflavin biosynthesis; riboflavin from 2-hydroxy-3-oxobutyl phosphate and 5-amino-6-(D-ribitylamino)uracil: step 1/2. Its function is as follows. Catalyzes the formation of 6,7-dimethyl-8-ribityllumazine by condensation of 5-amino-6-(D-ribitylamino)uracil with 3,4-dihydroxy-2-butanone 4-phosphate. This is the penultimate step in the biosynthesis of riboflavin. In Sulfurovum sp. (strain NBC37-1), this protein is 6,7-dimethyl-8-ribityllumazine synthase.